A 65-amino-acid polypeptide reads, in one-letter code: Large ribosomal subunit protein bL35 (65 aa).

Belongs to the bacterial ribosomal protein bL35 family.

The polypeptide is Large ribosomal subunit protein bL35 (Aeromonas hydrophila subsp. hydrophila (strain ATCC 7966 / DSM 30187 / BCRC 13018 / CCUG 14551 / JCM 1027 / KCTC 2358 / NCIMB 9240 / NCTC 8049)).